Consider the following 415-residue polypeptide: tRNA(Met) cytidine acetate ligase (415 aa).

ATP-binding positions include 7–20 (IVEY…HLYH), G102, N165, and 190–191 (RI).

Belongs to the TmcAL family.

The protein resides in the cytoplasm. It catalyses the reaction cytidine(34) in elongator tRNA(Met) + acetate + ATP = N(4)-acetylcytidine(34) in elongator tRNA(Met) + AMP + diphosphate. Functionally, catalyzes the formation of N(4)-acetylcytidine (ac(4)C) at the wobble position of elongator tRNA(Met), using acetate and ATP as substrates. First activates an acetate ion to form acetyladenylate (Ac-AMP) and then transfers the acetyl group to tRNA to form ac(4)C34. The polypeptide is tRNA(Met) cytidine acetate ligase (Acetivibrio thermocellus (strain ATCC 27405 / DSM 1237 / JCM 9322 / NBRC 103400 / NCIMB 10682 / NRRL B-4536 / VPI 7372) (Clostridium thermocellum)).